Here is a 428-residue protein sequence, read N- to C-terminus: Enolase (428 aa).

(2R)-2-phosphoglycerate is bound at residue glutamine 163. Glutamate 205 serves as the catalytic Proton donor. 3 residues coordinate Mg(2+): aspartate 242, glutamate 283, and aspartate 310. (2R)-2-phosphoglycerate is bound by residues lysine 335, arginine 364, serine 365, and lysine 386. Lysine 335 serves as the catalytic Proton acceptor.

The protein belongs to the enolase family. Mg(2+) is required as a cofactor.

The protein resides in the cytoplasm. It is found in the secreted. Its subcellular location is the cell surface. The enzyme catalyses (2R)-2-phosphoglycerate = phosphoenolpyruvate + H2O. Its pathway is carbohydrate degradation; glycolysis; pyruvate from D-glyceraldehyde 3-phosphate: step 4/5. Catalyzes the reversible conversion of 2-phosphoglycerate (2-PG) into phosphoenolpyruvate (PEP). It is essential for the degradation of carbohydrates via glycolysis. This is Enolase from Saccharopolyspora erythraea (strain ATCC 11635 / DSM 40517 / JCM 4748 / NBRC 13426 / NCIMB 8594 / NRRL 2338).